The sequence spans 172 residues: Signal peptidase complex catalytic subunit SEC11 (172 aa).

Topologically, residues 1–14 (MLSSLQNPRQAAAQ) are cytoplasmic. Residues 15–35 (LMNFAMILSTAFMMWKGLSVA) form a helical; Signal-anchor for type II membrane protein membrane-spanning segment. Over 36 to 172 (TDSPSPIVVV…MGLLVVIQRE (137 aa)) the chain is Lumenal. Active-site charge relay system residues include Ser-49, His-90, and Asp-115. The segment at 158 to 169 (VMLGIMGLLVVI) is C-terminal short (CTS) helix.

This sequence belongs to the peptidase S26B family. Component of the signal peptidase complex (SPC) composed of a catalytic subunit SEC11 and three accessory subunits SPC1, SPC2 and SPC3. The complex induces a local thinning of the ER membrane which is used to measure the length of the signal peptide (SP) h-region of protein substrates. This ensures the selectivity of the complex towards h-regions shorter than 18-20 amino acids. SPC associates with the translocon complex.

The protein resides in the endoplasmic reticulum membrane. The enzyme catalyses Cleavage of hydrophobic, N-terminal signal or leader sequences from secreted and periplasmic proteins.. Catalytic component of the signal peptidase complex (SPC) which catalyzes the cleavage of N-terminal signal sequences from nascent proteins as they are translocated into the lumen of the endoplasmic reticulum. Specifically cleaves N-terminal signal peptides that contain a hydrophobic alpha-helix (h-region) shorter than 18-20 amino acids. The sequence is that of Signal peptidase complex catalytic subunit SEC11 (SEC11) from Metarhizium robertsii (strain ARSEF 23 / ATCC MYA-3075) (Metarhizium anisopliae (strain ARSEF 23)).